The sequence spans 311 residues: Tryptophan 2,3-dioxygenase (311 aa).

Residues methionine 1 to aspartate 37 are disordered. The span at alanine 17–histidine 27 shows a compositional bias: low complexity. Substrate contacts are provided by residues phenylalanine 80 to histidine 84, tyrosine 142, and arginine 146. Histidine 269 provides a ligand contact to heme. Threonine 283 contacts substrate.

Belongs to the tryptophan 2,3-dioxygenase family. Homotetramer. Heme is required as a cofactor.

The enzyme catalyses L-tryptophan + O2 = N-formyl-L-kynurenine. Its pathway is amino-acid degradation; L-tryptophan degradation via kynurenine pathway; L-kynurenine from L-tryptophan: step 1/2. In terms of biological role, heme-dependent dioxygenase that catalyzes the oxidative cleavage of the L-tryptophan (L-Trp) pyrrole ring and converts L-tryptophan to N-formyl-L-kynurenine. Catalyzes the oxidative cleavage of the indole moiety. This chain is Tryptophan 2,3-dioxygenase, found in Burkholderia orbicola (strain MC0-3).